Here is a 253-residue protein sequence, read N- to C-terminus: Small ribosomal subunit protein uS2 (253 aa).

Ser-2 carries the post-translational modification N-acetylserine. The interval 212 to 253 (QQAAEEAAAGEEDDEAKEEVAAEEQTEAADWAEGQSEEVASW) is disordered. Over residues 219–238 (AAGEEDDEAKEEVAAEEQTE) the composition is skewed to acidic residues.

This sequence belongs to the universal ribosomal protein uS2 family. As to quaternary structure, component of the small ribosomal subunit. Mature ribosomes consist of a small (40S) and a large (60S) subunit. The 40S subunit contains about 33 different proteins and 1 molecule of RNA (18S). The 60S subunit contains about 49 different proteins and 3 molecules of RNA (25S, 5.8S and 5S). Interacts with RPS21.

The protein resides in the cytoplasm. Its function is as follows. Required for the assembly and/or stability of the 40S ribosomal subunit. Required for the processing of the 20S rRNA-precursor to mature 18S rRNA in a late step of the maturation of 40S ribosomal subunits. The protein is Small ribosomal subunit protein uS2 of Eremothecium gossypii (strain ATCC 10895 / CBS 109.51 / FGSC 9923 / NRRL Y-1056) (Yeast).